A 30-amino-acid chain; its full sequence is 136 kDa hydroxyproline-rich cell wall glycoprotein, major component (30 aa).

Pro-8, Pro-9, Pro-10, Pro-11, Pro-12, Pro-17, Pro-18, Pro-19, Pro-20, Pro-26, Pro-27, Pro-28, and Pro-29 each carry 4-hydroxyproline.

Post-translationally, O-glycosylated.

It is found in the secreted. It localises to the cell wall. The protein is 136 kDa hydroxyproline-rich cell wall glycoprotein, major component of Phaseolus vulgaris (Kidney bean).